The sequence spans 2843 residues: Adenomatous polyposis coli protein (2843 aa).

Ala2 bears the N-acetylalanine mark. A coiled-coil region spans residues 2 to 61 (AAASYDQLLKQVEALKMENSNLRQELEDNSNHLTKLETEASNMKEVLKQLQGSIEDEAMA). 2 positions are modified to phosphoserine: Ser107 and Ser111. A coiled-coil region spans residues 127 to 248 (SRESTGYLEE…ATEAERSSQN (122 aa)). The disordered stretch occupies residues 239 to 305 (ATEAERSSQN…STHSAPRRLT (67 aa)). The segment covering 241 to 261 (EAERSSQNKHETGSHDAERQN) has biased composition (basic and acidic residues). Positions 271–282 (MATSGNGQGSTT) are enriched in polar residues. Positions 290–299 (SVLSSSSTHS) are enriched in low complexity. ARM repeat units follow at residues 453-495 (LMKL…HYSI), 505-547 (LTNL…IASV), 548-591 (LRNL…VLSA), 592-638 (LWNL…GGGI), 639-683 (LRNV…ACGT), 684-725 (LWNL…SAAA), and 726-767 (LRNL…LDAQ). 3 positions are modified to phosphoserine: Ser744, Ser748, and Ser780. Residues 828–878 (TTVLPSSSSSRGSLDSSRSEKDRSLERERGIGLGNYHPATENPGTSSKRGL) form a disordered region. Low complexity predominate over residues 833-843 (SSSSSRGSLDS). The span at 844–857 (SRSEKDRSLERERG) shows a compositional bias: basic and acidic residues. A compositionally biased stretch (polar residues) spans 869–878 (NPGTSSKRGL). Residue Ser908 is modified to Phosphoserine. Disordered stretches follow at residues 923-943 (RRSSAAHTHSNTYNFTKSENS) and 958-987 (RSSNDSLNSVSSSDGYGKRGQMKPSIESYS). The span at 927 to 943 (AAHTHSNTYNFTKSENS) shows a compositional bias: polar residues. The interval 960-1337 (SNDSLNSVSS…QHPRTKSSRL (378 aa)) is responsible for down-regulation through a process mediated by direct ubiquitination. Residues 961 to 971 (NDSLNSVSSSD) show a composition bias toward low complexity. Phosphoserine is present on residues Ser987, Ser1038, and Ser1042. Positions 1020-1169 (ELDTPINYSL…TNYSIKYNEE (150 aa)) are interaction with catenins. 3 disordered regions span residues 1099–1169 (VSPY…YNEE), 1190–1244 (SQKQ…GQPQ), and 1311–1376 (IGTR…PEHY). Residues 1107–1130 (ANGSETNRVGSNHGINQNVSQSLC) show a composition bias toward polar residues. Basic and acidic residues predominate over residues 1146–1159 (RYSEEEQHEEEERP). Over residues 1190-1224 (SQKQSFSFSKSSSGQSSKTEHMSSSSENTSTPSSN) the composition is skewed to low complexity. Positions 1225-1244 (AKRQNQLHPSSAQSRSGQPQ) are enriched in polar residues. 2 stretches are compositionally biased toward low complexity: residues 1335–1345 (SRLQGSSLSSE) and 1355–1366 (SSGAKSPSKSGA). Phosphoserine is present on residues Ser1360, Ser1371, Ser1385, Ser1392, and Ser1395. Disordered regions lie at residues 1403–1475 (SSVQ…VNAA), 1526–1569 (PPVQ…DSDD), 1583–1611 (MPTKSSRKAKKPAQTASKLPPPVARKPSQ), 1664–1717 (SPPN…DDNK), and 1729–1836 (NSAM…RVRG). Thr1438 bears the Phosphothreonine mark. Basic and acidic residues-rich tracts occupy residues 1448–1466 (TKREVPKNKAPTAEKRESG) and 1540–1564 (EQPKESNENQEKEAEKTIDSEKDLL). Phosphoserine is present on Ser1567. The span at 1683-1698 (EFEKRDTIPTEGRSTD) shows a compositional bias: basic and acidic residues. Residues 1735-1744 (GKSHKPFRVK) show a composition bias toward basic residues. Residue Ser1774 is modified to Phosphoserine. Basic and acidic residues-rich tracts occupy residues 1785–1794 (YRTRVRKNAD) and 1804–1813 (VFSDNKDSKK). Ser1861, Ser1863, and Ser1864 each carry phosphoserine. The tract at residues 1866–1893 (DFDDDDVDLSREKAELRKAKENKESEAK) is highly charged. The segment covering 1881–1896 (LRKAKENKESEAKVTS) has biased composition (basic and acidic residues). 3 disordered regions span residues 1881–1950 (LRKA…TDEK), 1965–2011 (HNSS…APKS), and 2043–2072 (ISSAMPKKKKPSRLKGDNEKHSPRNMGGIL). 2 stretches are compositionally biased toward polar residues: residues 1897-1913 (HTELTSNQQSANKTQAI) and 1928-1938 (QKQSTFPQSSK). Residues 1939 to 1950 (DIPDRGAATDEK) show a composition bias toward basic and acidic residues. Ser1971 and Ser1973 each carry phosphoserine. Basic and acidic residues predominate over residues 1979 to 1991 (NNNKENEPIKETE). The interaction with AXIN1 stretch occupies residues 2035 to 2059 (EDDLLQECISSAMPKKKKPSRLKGD). 6 positions are modified to phosphoserine: Ser2088, Ser2093, Ser2125, Ser2129, Ser2130, and Ser2132. 2 disordered regions span residues 2147 to 2635 (PFHL…SGAT) and 2667 to 2714 (NNPR…VPMR). Thr2151 is modified (phosphothreonine). The tract at residues 2167-2674 (ILKPGEKSTL…PINNPRSGRS (508 aa)) is basic region. Over residues 2169 to 2187 (KPGEKSTLETKKIESESKG) the composition is skewed to basic and acidic residues. Composition is skewed to polar residues over residues 2203-2223 (VRSNSEISGQMKQPLQANMPS) and 2257-2271 (ASKSPSEGQTATTSP). Phosphoserine is present on residues Ser2260, Ser2270, and Ser2283. Residues 2286 to 2331 (ARQTSQIGGSSKAPSRSGSRDSTPSRPAQQPLSRPIQSPGRNSISP) are compositionally biased toward polar residues. The segment covering 2348-2369 (TSSPSTASTKSSGSGKMSYTSP) has biased composition (low complexity). Polar residues-rich tracts occupy residues 2370 to 2409 (GRQMSQQNLTKQTGLSKNASSIPRSESASKGLNQMNNGNG) and 2418 to 2427 (RMSSTKSSGS). Residues 2459–2477 (SASFESLSPSSRPASPTRS) are compositionally biased toward low complexity. Phosphoserine occurs at positions 2473 and 2535. The segment at 2475 to 2843 (TRSQAQTPVL…HSGSYLVTSV (369 aa)) is interaction with DLG1. The segment covering 2518-2535 (NDGRPAKRHDIARSHSES) has biased composition (basic and acidic residues). A compositionally biased stretch (polar residues) spans 2555-2568 (SSSLPRVSTWRRTG). Ser2569 is subject to Phosphoserine. A compositionally biased stretch (low complexity) spans 2569 to 2579 (SSSSILSASSE). The span at 2580-2592 (SSEKAKSEDEKHV) shows a compositional bias: basic and acidic residues. 3 stretches are compositionally biased toward polar residues: residues 2593–2608 (NSISGTKQSKENQVSA), 2620–2635 (FSPTNSTSQTVSSGAT), and 2668–2679 (NPRSGRSPTGNT). Phosphoserine occurs at positions 2671 and 2674. Positions 2674-2843 (SPTGNTPPVI…HSGSYLVTSV (170 aa)) are interaction with MAPRE1. Thr2679 carries the post-translational modification Phosphothreonine. Ser2710 and Ser2724 each carry phosphoserine. Positions 2729 to 2843 (DAPDQKGTEI…HSGSYLVTSV (115 aa)) are disordered. Polar residues predominate over residues 2741–2757 (GQNNPVPVSETNESSIV). A compositionally biased stretch (low complexity) spans 2763–2774 (SSSSSSKHSSPS). Over residues 2784-2812 (FNYNPSPRKSSADSTSARPSQIPTPVNNN) the composition is skewed to polar residues. Ser2789 carries the phosphoserine modification. The Microtubule tip localization signal signature appears at 2803-2806 (SQIP). Positions 2841 to 2843 (TSV) match the PDZ-binding motif.

Belongs to the adenomatous polyposis coli (APC) family. As to quaternary structure, forms homooligomers. Found in a complex consisting of ARHGEF4, APC and CTNNB1. Found in a complex composed of MACF1, APC, AXIN1, CTNNB1 and GSK3B. The complex composed, at least, of APC, CTNNB1 and GSK3B interacts with JPT1; the interaction requires the inactive form of GSK3B (phosphorylated at 'Ser-9'). Interacts with APC2. Interacts with DLG1 (via PDZ domains) and DLG3 (via PDZ domains). Interacts with alpha- and beta-catenins. Interacts with AXIN1 (via RGS domain). Interacts with ARHGEF4 (via N-terminus). Interacts (via C-terminal residues 2674-2843) with MAPRE1 (via C-terminal residues 206-211); the interaction inhibits association with and bundling of F-actin. Interacts with MAPRE2 and MAPRE3 (via C-terminus). Interacts with DIAPH1; DIAPH1 acts as a scaffold protein for MAPRE1 and APC to stabilize microtubules and promote cell migration. Interacts with DIAPH2. Interacts with SCRIB; may mediate APC targeting to adherens junctions of epithelial cells. Interacts with SPATA13 (via N-terminus and SH3 domain). Interacts with ASAP1 (via SH3 domain). Interacts (at the cell membrane) with AMER1 and AMER2 (via ARM repeats). Interacts with KHDRBS1. Interacts with actin; binds both to F-actin and actin filament bundles. In terms of processing, phosphorylated; phosphorylation enhances the F-actin bundling activity. Phosphorylated by GSK3B. Post-translationally, ubiquitinated, leading to its degradation by the proteasome. Ubiquitination is facilitated by Axin. Deubiquitinated by ZRANB1/TRABID. As to expression, expressed in a variety of tissues: brain, small intestine, colon, thymus, skeletal muscle, heart, prostate, lung, spleen, ovary, testis kidney, placenta, blood and liver. Isoform 1A: Very strongly expressed in brain but has relatively low expression levels in other tissues. Isoform 1B: Predominant form in all tissues except for brain, including gastric mucosa and blood.

It localises to the cell junction. The protein resides in the adherens junction. The protein localises to the cytoplasm. It is found in the cytoskeleton. Its subcellular location is the cell projection. It localises to the lamellipodium. The protein resides in the ruffle membrane. The protein localises to the cell membrane. In terms of biological role, tumor suppressor. Promotes rapid degradation of CTNNB1 and participates in Wnt signaling as a negative regulator. APC activity is correlated with its phosphorylation state. Activates the GEF activity of SPATA13 and ARHGEF4. Plays a role in hepatocyte growth factor (HGF)-induced cell migration. Required for MMP9 up-regulation via the JNK signaling pathway in colorectal tumor cells. Associates with both microtubules and actin filaments, components of the cytoskeleton. Plays a role in mediating the organization of F-actin into ordered bundles. Functions downstream of Rho GTPases and DIAPH1 to selectively stabilize microtubules. Acts as a mediator of ERBB2-dependent stabilization of microtubules at the cell cortex. It is required for the localization of MACF1 to the cell membrane and this localization of MACF1 is critical for its function in microtubule stabilization. This Homo sapiens (Human) protein is Adenomatous polyposis coli protein.